We begin with the raw amino-acid sequence, 244 residues long: 1-(5-phosphoribosyl)-5-[(5-phosphoribosylamino)methylideneamino] imidazole-4-carboxamide isomerase (244 aa).

Aspartate 8 serves as the catalytic Proton acceptor. The Proton donor role is filled by aspartate 130.

This sequence belongs to the HisA/HisF family.

The protein localises to the cytoplasm. The catalysed reaction is 1-(5-phospho-beta-D-ribosyl)-5-[(5-phospho-beta-D-ribosylamino)methylideneamino]imidazole-4-carboxamide = 5-[(5-phospho-1-deoxy-D-ribulos-1-ylimino)methylamino]-1-(5-phospho-beta-D-ribosyl)imidazole-4-carboxamide. The protein operates within amino-acid biosynthesis; L-histidine biosynthesis; L-histidine from 5-phospho-alpha-D-ribose 1-diphosphate: step 4/9. The protein is 1-(5-phosphoribosyl)-5-[(5-phosphoribosylamino)methylideneamino] imidazole-4-carboxamide isomerase of Hahella chejuensis (strain KCTC 2396).